The chain runs to 209 residues: Peroxynitrite isomerase 2 (209 aa).

Residues 56-62 carry the GXWXGXG motif; the sequence is GVWRGEG. 2 residues coordinate heme b: Lys-172 and His-199.

This sequence belongs to the nitrobindin family. In terms of assembly, homodimer. Heme b serves as cofactor.

The enzyme catalyses peroxynitrite = nitrate. It functions in the pathway nitrogen metabolism. In terms of biological role, heme-binding protein able to scavenge peroxynitrite and to protect free L-tyrosine against peroxynitrite-mediated nitration, by acting as a peroxynitrite isomerase that converts peroxynitrite to nitrate. Therefore, this protein likely plays a role in peroxynitrite sensing and in the detoxification of reactive nitrogen and oxygen species (RNS and ROS, respectively). Is able to bind nitric oxide (NO) in vitro, but may act as a sensor of peroxynitrite levels in vivo. This chain is Peroxynitrite isomerase 2, found in Mycolicibacterium vanbaalenii (strain DSM 7251 / JCM 13017 / BCRC 16820 / KCTC 9966 / NRRL B-24157 / PYR-1) (Mycobacterium vanbaalenii).